The chain runs to 123 residues: Large ribosomal subunit protein bL12 (123 aa).

This sequence belongs to the bacterial ribosomal protein bL12 family. Homodimer. Part of the ribosomal stalk of the 50S ribosomal subunit. Forms a multimeric L10(L12)X complex, where L10 forms an elongated spine to which 2 to 4 L12 dimers bind in a sequential fashion. Binds GTP-bound translation factors.

In terms of biological role, forms part of the ribosomal stalk which helps the ribosome interact with GTP-bound translation factors. Is thus essential for accurate translation. This chain is Large ribosomal subunit protein bL12, found in Bacillus licheniformis (strain ATCC 14580 / DSM 13 / JCM 2505 / CCUG 7422 / NBRC 12200 / NCIMB 9375 / NCTC 10341 / NRRL NRS-1264 / Gibson 46).